Reading from the N-terminus, the 390-residue chain is Na(+)/H(+) antiporter NhaA (390 aa).

12 helical membrane passes run 14-34 (AAGGIVLIAAAALAMLLANLN), 61-81 (MLLWVNDALMAVFFLLVGLEV), 97-117 (SLPVIAALGGMVLPAALYLAF), 126-146 (AGWAIPAATDIAFALGILALL), 156-176 (VFLMALAIIDDLGAIVIIALF), 181-201 (LSMVSLMVAAGAIAVLAVLNL), 221-241 (VLKSGVHATLAGVIIGFFVPL), 256-276 (ALHPWVGFLILPLFAFANAGV), 280-300 (GVTLAGLASLLPLGIIAGLFI), 305-325 (GISLFCALAVKLKWATLPPGV), 330-350 (ILAVGVLCGIGFTMSIFIASL), and 362-382 (WAKLGILVGSLLAAVIGYALL).

The protein belongs to the NhaA Na(+)/H(+) (TC 2.A.33) antiporter family.

It is found in the cell inner membrane. It carries out the reaction Na(+)(in) + 2 H(+)(out) = Na(+)(out) + 2 H(+)(in). Functionally, na(+)/H(+) antiporter that extrudes sodium in exchange for external protons. In Cronobacter sakazakii (strain ATCC BAA-894) (Enterobacter sakazakii), this protein is Na(+)/H(+) antiporter NhaA.